The primary structure comprises 736 residues: Microtubule-associated protein mu-2 (736 aa).

This sequence belongs to the orthoreovirus mu-2 protein family. In terms of assembly, interacts with protein mu-NS; in viral inclusions. Interacts with polymerase lambda-3; this interaction stimulates the ATPase activity of mu-2. A divalent metal cation is required as a cofactor.

It is found in the virion. The protein localises to the host cytoplasm. Its subcellular location is the host cytoskeleton. In terms of biological role, minor inner capsid (core) component. Displays NTPase and RNA 5'-triphosphatase (RTPase) activities. ATP is the preferred substrate for hydrolysis. May function as a cofactor of polymerase lambda-3. Associates with microtubules and plays a role in the formation, structural organization and morphology of viral inclusions, where the assembly of cores and the replication of viral RNA occur. Together with mu-NS, recruits the other core proteins to these inclusions. This is Microtubule-associated protein mu-2 (M1) from Mammalia (T1L).